We begin with the raw amino-acid sequence, 436 residues long: ATP-dependent RNA helicase RhlB (436 aa).

A Q motif motif is present at residues 9 to 37; sequence QKFADFPLHKEVHQALNEAGFEFCTPIQA. A Helicase ATP-binding domain is found at 40–219; that stretch reads LPILLEKKDI…YDHMNEPEKV (180 aa). 53–60 contributes to the ATP binding site; it reads AQTGTGKT. The DEAD box motif lies at 165 to 168; the sequence is DEAD. Positions 243–390 constitute a Helicase C-terminal domain; that stretch reads KMPLLLSLLE…VTSYDSDALL (148 aa). Positions 392–436 are disordered; sequence DIPPPVRIHRKPSTHTRNTRDRGASRPQGGQRSGPRRHDRTRRHS. Basic residues predominate over residues 425-436; it reads GPRRHDRTRRHS.

This sequence belongs to the DEAD box helicase family. RhlB subfamily. Component of the RNA degradosome, which is a multiprotein complex involved in RNA processing and mRNA degradation.

It localises to the cytoplasm. It carries out the reaction ATP + H2O = ADP + phosphate + H(+). Functionally, DEAD-box RNA helicase involved in RNA degradation. Has RNA-dependent ATPase activity and unwinds double-stranded RNA. The sequence is that of ATP-dependent RNA helicase RhlB from Shewanella halifaxensis (strain HAW-EB4).